Consider the following 262-residue polypeptide: Iso-A82775C biosynthesis cluster protein B (262 aa).

Its function is as follows. Part of the gene cluster that mediates the biosynthesis of iso-A82775C, a enylepoxycyclohexane and biosynthetic precursor of the chloropestolide anticancer natural products. Within the cluster, the prenyltransferase iacE prenylates siccayne to generate pestalodiol E, using dimethylallyl diphosphate (DMAPP) as cosubstrate. The probable oxidoreductase iacF is then involved in the epoxidation of pestalodiol F to pestalodiol F, which is further converted to pestalofone A by the short-chain dehydrogenase/reductase iacG. Iso-A82775C is subsequently generated from pestalofone A by the short-chain dehydrogenase/reductase iacC. Iso-A82775C is further condensed with maldoxin via a Diels-Alder reaction to produce the anticancer natural products chloropestolides A to E. This is Iso-A82775C biosynthesis cluster protein B from Pestalotiopsis fici (strain W106-1 / CGMCC3.15140).